Here is a 432-residue protein sequence, read N- to C-terminus: MYDGLKGFREFYPGEMSARREVTDTIETRARRYGFREVGTPALERTQLYVDKSGEEIVEELYAFEDKGGREVSLTPELTPTVARMVVAKQQALAKPVKWFSTRPFWRYEQVQQGRFREFYQTNIDIFGSERPEADAEVLATAADALTDLGLDGADFEFRVSHRDILGGLLAAMDSDVDTTDAIRAVDKREKIDDEEYRSLLVGAGLTHEEADTFDSLLRTDDLSELVEFAGTDRVEAAVENLQAVLDAAADFGVREFCSVSLETARGLDYYTGVVFECFDTSGEVSRSVFGGGRYDDLIESFGGQPTPAVGVGIGHETLSLLCQRAGVWPAEELSTDYYVLTVGDTRDVALDVARELRALGHVVETDLSDRGFGDQLSYADGINAETVVVVGEQDLEDDAVTLKDMASGDQTQVPLAAFPPEEGRPTYDDYA.

The tract at residues 412–432 (TQVPLAAFPPEEGRPTYDDYA) is disordered. Positions 422–432 (EEGRPTYDDYA) are enriched in basic and acidic residues.

Belongs to the class-II aminoacyl-tRNA synthetase family.

Its subcellular location is the cytoplasm. It carries out the reaction tRNA(His) + L-histidine + ATP = L-histidyl-tRNA(His) + AMP + diphosphate + H(+). This is Histidine--tRNA ligase from Natronomonas pharaonis (strain ATCC 35678 / DSM 2160 / CIP 103997 / JCM 8858 / NBRC 14720 / NCIMB 2260 / Gabara) (Halobacterium pharaonis).